Reading from the N-terminus, the 636-residue chain is Molybdenum cofactor biosynthesis protein 1 (636 aa).

A molybdenum cofactor biosynthesis protein A region spans residues 1–383 (MAARPLSRML…QMKNRPMILI (383 aa)). The residue at position 64 (Ser64) is a Phosphoserine. Residues 64 to 277 (SFGRQHSYLR…LDTVRQQWPE (214 aa)) enclose the Radical SAM core domain. Arg73 provides a ligand contact to GTP. [4Fe-4S] cluster-binding residues include Cys80 and Cys84. Tyr86 provides a ligand contact to S-adenosyl-L-methionine. Cys87 serves as a coordination point for [4Fe-4S] cluster. Residue Arg123 coordinates GTP. Position 127 (Gly127) interacts with S-adenosyl-L-methionine. Position 154 (Thr154) interacts with GTP. Ser178 contributes to the S-adenosyl-L-methionine binding site. Position 198 is an N6-acetyllysine (Lys198). Position 215 (Lys215) interacts with GTP. Met249 provides a ligand contact to S-adenosyl-L-methionine. [4Fe-4S] cluster contacts are provided by Cys312 and Cys315. Residue 317-319 (RLR) coordinates GTP. Position 329 (Cys329) interacts with [4Fe-4S] cluster. Residues 414–636 (MSFSSQVATL…GGQRGDFHRA (223 aa)) are molybdenum cofactor biosynthesis protein C. The segment at 456 to 480 (DANSKCLSPGSWASAAPSGPQLTSE) is disordered. Positions 463–475 (SPGSWASAAPSGP) are enriched in low complexity. The residue at position 528 (Lys528) is an N6-acetyllysine. Asp606 functions as the For molybdenum cofactor biosynthesis protein C activity in the catalytic mechanism.

It in the C-terminal section; belongs to the MoaC family. This sequence in the N-terminal section; belongs to the radical SAM superfamily. MoaA family. Isoform MOCS1A and isoform MOCS1B probably form a heterooligomer. It depends on [4Fe-4S] cluster as a cofactor. Isoform MOCS1A and isoform 2 are widely expressed.

It carries out the reaction GTP + AH2 + S-adenosyl-L-methionine = (8S)-3',8-cyclo-7,8-dihydroguanosine 5'-triphosphate + 5'-deoxyadenosine + L-methionine + A + H(+). The enzyme catalyses (8S)-3',8-cyclo-7,8-dihydroguanosine 5'-triphosphate = cyclic pyranopterin phosphate + diphosphate. Its pathway is cofactor biosynthesis; molybdopterin biosynthesis. Isoform MOCS1A and isoform MOCS1B probably form a complex that catalyzes the conversion of 5'-GTP to cyclic pyranopterin monophosphate (cPMP). MOCS1A catalyzes the cyclization of GTP to (8S)-3',8-cyclo-7,8-dihydroguanosine 5'-triphosphate and MOCS1B catalyzes the subsequent conversion of (8S)-3',8-cyclo-7,8-dihydroguanosine 5'-triphosphate to cPMP. The chain is Molybdenum cofactor biosynthesis protein 1 (MOCS1) from Homo sapiens (Human).